Consider the following 144-residue polypeptide: Ribonuclease H (144 aa).

The RNase H type-1 domain maps to 1 to 141; sequence MDKIDIYSDG…ADALANRGVE (141 aa). Positions 9, 47, 69, and 133 each coordinate Mg(2+).

Belongs to the RNase H family. As to quaternary structure, monomer. Requires Mg(2+) as cofactor.

It is found in the cytoplasm. The enzyme catalyses Endonucleolytic cleavage to 5'-phosphomonoester.. Its function is as follows. Endonuclease that specifically degrades the RNA of RNA-DNA hybrids. The protein is Ribonuclease H of Janthinobacterium sp. (strain Marseille) (Minibacterium massiliensis).